A 224-amino-acid chain; its full sequence is Retinoschisin (224 aa).

Positions 1–23 (MPHKIEGFFLLLLFGYEATLGLS) are cleaved as a signal peptide. An F5/8 type C domain is found at 63–219 (CPYHKPLGFE…IAIRMELLEC (157 aa)). Disulfide bonds link Cys-63–Cys-219 and Cys-110–Cys-142.

Homooctamer of 4 homodimers; disulfide-linked. The homooctamer has a flat, cogwheel structure with a diameter of about 14 nm. Two stacked octamers can assemble to form a hexadecamer. As to expression, detected in the eye cup. Detected in retina, in the inner segment of the photoreceptors, the inner nuclear layer, the inner plexiform layer and the ganglion cell layer (at protein level). Restricted to the retina. At the mRNA level, detected only within the photoreceptor cell layer, most prominently within the inner segments of the photoreceptors. Undetectable in the inner plexiform layers and the inner nuclear layer.

Its subcellular location is the secreted. The protein localises to the cell membrane. In terms of biological role, binds negatively charged membrane lipids, such as phosphatidylserine and phosphoinositides. May play a role in cell-cell adhesion processes in the retina, via homomeric interaction between octamers present on the surface of two neighboring cells. Required for normal structure and function of the retina. The protein is Retinoschisin (Rs1) of Mus musculus (Mouse).